The chain runs to 388 residues: MNLHEYQGKQLFAEYGLPVSKGYAVDTPEAAAEACDKIGGTEWVVKAQVHAGGRGKAGGVKLVRSKEDAKAFAQQWLGKRLVTYQTDANGQPVTKILVESCTDIAKELYLGAVVDRSSRRIVFMASTEGGVDIEKIAEETPEKILKATIDPLVGAQPFQGRELAFQLGLEGKQVAQFAKIFVGLAKLFQDHDLALLEVNPLVIKADGDLHCLDAKINIDANAMYRQPKLKTFHDPSQDDPREAHAAKFELNYVALEGNIGCMVNGAGLAMGTMDIVNLHGGKPANFLDVGGGATKERVTEAFKIILSDSNVAAVLVNIFGGIVRCDMIAEGIIGAVKEVGVKIPVVVRLEGNNAELGAKVLAESGLNIIAATSLTDAAQQVVKAAEGK.

The region spanning 9–244 (KQLFAEYGLP…PSQDDPREAH (236 aa)) is the ATP-grasp domain. ATP is bound by residues Lys46, 53–55 (GRG), Glu99, Thr102, and Glu107. Residues Asn199 and Asp213 each coordinate Mg(2+). Residues Asn264 and 321–323 (GIV) contribute to the substrate site.

This sequence belongs to the succinate/malate CoA ligase beta subunit family. Heterotetramer of two alpha and two beta subunits. Requires Mg(2+) as cofactor.

It carries out the reaction succinate + ATP + CoA = succinyl-CoA + ADP + phosphate. The enzyme catalyses GTP + succinate + CoA = succinyl-CoA + GDP + phosphate. Its pathway is carbohydrate metabolism; tricarboxylic acid cycle; succinate from succinyl-CoA (ligase route): step 1/1. Functionally, succinyl-CoA synthetase functions in the citric acid cycle (TCA), coupling the hydrolysis of succinyl-CoA to the synthesis of either ATP or GTP and thus represents the only step of substrate-level phosphorylation in the TCA. The beta subunit provides nucleotide specificity of the enzyme and binds the substrate succinate, while the binding sites for coenzyme A and phosphate are found in the alpha subunit. In Pseudomonas fluorescens (strain SBW25), this protein is Succinate--CoA ligase [ADP-forming] subunit beta.